Here is a 352-residue protein sequence, read N- to C-terminus: Protein-glutamate methylesterase/protein-glutamine glutaminase (352 aa).

One can recognise a Response regulatory domain in the interval 5–123; sequence RILIVDDSVI…SKEKAIEYIR (119 aa). Aspartate 56 bears the 4-aspartylphosphate mark. The CheB-type methylesterase domain occupies 166-352; sequence EIVAIGVSTG…LAEEIIRRIG (187 aa). Residues serine 173, histidine 200, and aspartate 296 contribute to the active site.

The protein belongs to the CheB family. Phosphorylated by CheA. Phosphorylation of the N-terminal regulatory domain activates the methylesterase activity.

It is found in the cytoplasm. The enzyme catalyses [protein]-L-glutamate 5-O-methyl ester + H2O = L-glutamyl-[protein] + methanol + H(+). It carries out the reaction L-glutaminyl-[protein] + H2O = L-glutamyl-[protein] + NH4(+). Its function is as follows. Involved in chemotaxis. Part of a chemotaxis signal transduction system that modulates chemotaxis in response to various stimuli. Catalyzes the demethylation of specific methylglutamate residues introduced into the chemoreceptors (methyl-accepting chemotaxis proteins or MCP) by CheR. Also mediates the irreversible deamidation of specific glutamine residues to glutamic acid. The sequence is that of Protein-glutamate methylesterase/protein-glutamine glutaminase from Trichodesmium erythraeum (strain IMS101).